We begin with the raw amino-acid sequence, 351 residues long: Protein arginine N-methyltransferase 1-B (351 aa).

The SAM-dependent MTase PRMT-type domain occupies K30–V331. The S-adenosyl-L-methionine site is built by H43, R52, G76, E98, and E127. Residues E142 and E151 contribute to the active site.

This sequence belongs to the class I-like SAM-binding methyltransferase superfamily. Protein arginine N-methyltransferase family. In terms of assembly, homodimer. Homooctamer; individual homodimers associates to form a homooctamer and homooligomerization is required for proper localization to the cell membrane. Individual homodimers can associate to form a homohexamer. Component of a complex with lsm14a/rap55a. Interacts with cirbp. From the onset of gastrulation, expressed in dorsal mesoderm, and in dorsal and ventral ectoderm. At the neurula and tail bud stages, expression is restricted to the neuroectoderm, with highest expression in the anterior neural plate.

It is found in the nucleus. It localises to the nucleoplasm. The protein resides in the cytoplasm. Its subcellular location is the cytosol. It carries out the reaction L-arginyl-[protein] + 2 S-adenosyl-L-methionine = N(omega),N(omega)-dimethyl-L-arginyl-[protein] + 2 S-adenosyl-L-homocysteine + 2 H(+). It catalyses the reaction L-arginyl-[protein] + S-adenosyl-L-methionine = N(omega)-methyl-L-arginyl-[protein] + S-adenosyl-L-homocysteine + H(+). The enzyme catalyses N(omega)-methyl-L-arginyl-[protein] + S-adenosyl-L-methionine = N(omega),N(omega)-dimethyl-L-arginyl-[protein] + S-adenosyl-L-homocysteine + H(+). Arginine methyltransferase that methylates (mono and asymmetric dimethylation) the guanidino nitrogens of arginyl residues present in target proteins. Constitutes the main enzyme that mediates monomethylation and asymmetric dimethylation of histone H4 'Arg-4' (H4R3me1 and H4R3me2a, respectively), a specific tag for epigenetic transcriptional activation. Methylates ilf3 to regulate its DNA-binding activity. Required for neural induction, playing a key role in the control of epidermal versus neural cell fate choice. The sequence is that of Protein arginine N-methyltransferase 1-B (prmt1-b) from Xenopus laevis (African clawed frog).